A 353-amino-acid chain; its full sequence is Anthranilate phosphoribosyltransferase (353 aa).

Residues Gly-86, 89–90, 96–99, 114–122, and Ser-126 contribute to the 5-phospho-alpha-D-ribose 1-diphosphate site; these read GD, NVST, and KHGNRAVSG. Gly-86 contacts anthranilate. Ser-98 contacts Mg(2+). Position 117 (Asn-117) interacts with anthranilate. Arg-172 contacts anthranilate. Mg(2+) contacts are provided by Asp-231 and Glu-232.

Belongs to the anthranilate phosphoribosyltransferase family. As to quaternary structure, homodimer. It depends on Mg(2+) as a cofactor.

It catalyses the reaction N-(5-phospho-beta-D-ribosyl)anthranilate + diphosphate = 5-phospho-alpha-D-ribose 1-diphosphate + anthranilate. It functions in the pathway amino-acid biosynthesis; L-tryptophan biosynthesis; L-tryptophan from chorismate: step 2/5. Its function is as follows. Catalyzes the transfer of the phosphoribosyl group of 5-phosphorylribose-1-pyrophosphate (PRPP) to anthranilate to yield N-(5'-phosphoribosyl)-anthranilate (PRA). The polypeptide is Anthranilate phosphoribosyltransferase (Pseudomonas syringae pv. syringae (strain B728a)).